The chain runs to 485 residues: Glutamate--tRNA ligase (485 aa).

The 'HIGH' region motif lies at 11-21 (PSPTGHLHIGN). Residues 252–256 (KLSKR) carry the 'KMSKS' region motif. K255 serves as a coordination point for ATP.

The protein belongs to the class-I aminoacyl-tRNA synthetase family. Glutamate--tRNA ligase type 1 subfamily. Monomer.

The protein resides in the cytoplasm. It carries out the reaction tRNA(Glu) + L-glutamate + ATP = L-glutamyl-tRNA(Glu) + AMP + diphosphate. Functionally, catalyzes the attachment of glutamate to tRNA(Glu) in a two-step reaction: glutamate is first activated by ATP to form Glu-AMP and then transferred to the acceptor end of tRNA(Glu). The sequence is that of Glutamate--tRNA ligase from Bacillus cereus (strain ATCC 10987 / NRS 248).